The following is a 546-amino-acid chain: (-)-5-epieremophilene synthase STPS3 (546 aa).

Residues D299, D303, D442, T446, and E450 each contribute to the Mg(2+) site. The DDXXD motif signature appears at D299–D303.

The protein belongs to the terpene synthase family. Tpsa subfamily. In terms of assembly, monomer. Requires Mg(2+) as cofactor. As to expression, highly expressed in flowers and at lower levels in leaves.

It catalyses the reaction (2E,6E)-farnesyl diphosphate = (-)-5-epi-eremophilene + diphosphate. It participates in secondary metabolite biosynthesis; terpenoid biosynthesis. Sesquiterpene synthase that catalyzes the conversion of farnesyl diphosphate to (-)-5-epi-eremophilene. The chain is (-)-5-epieremophilene synthase STPS3 from Salvia miltiorrhiza (Chinese sage).